The following is a 337-amino-acid chain: 4-hydroxyproline 2-epimerase 2 (337 aa).

Residue C90 is the Proton acceptor of the active site. Substrate is bound by residues 91–92 (GH), H223, and D249. C253 (proton donor) is an active-site residue. 254-255 (GT) contacts substrate.

This sequence belongs to the proline racemase family.

The catalysed reaction is trans-4-hydroxy-L-proline = cis-4-hydroxy-D-proline. In terms of biological role, catalyzes the epimerization of trans-4-hydroxy-L-proline (t4LHyp) to cis-4-hydroxy-D-proline (c4DHyp). Is likely involved in a degradation pathway that converts t4LHyp to alpha-ketoglutarate. Can also catalyze the epimerization of trans-3-hydroxy-L-proline (t3LHyp) to cis-3-hydroxy-D-proline (c3DHyp), albeit with 170-fold lower efficiency. Displays no proline racemase activity. The protein is 4-hydroxyproline 2-epimerase 2 of Brucella anthropi (strain ATCC 49188 / DSM 6882 / CCUG 24695 / JCM 21032 / LMG 3331 / NBRC 15819 / NCTC 12168 / Alc 37) (Ochrobactrum anthropi).